The following is a 265-amino-acid chain: Transcription factor Spi-B-like (265 aa).

The interval 1-31 (MLTLEASQLDGPHPSYMFSDSSFYDLDSCKP) is TAD1 (Acidic). The tract at residues 42 to 63 (AEPPTDPCAGWLELAEPGYEPF) is TAD2. Residues 127 to 160 (TPLSEDDDFPTDAPALEVSDSDSDENLSPGGSLD) are disordered. The segment at residues 169-252 (LRLYQFLLGL…VKKKLTYQFG (84 aa)) is a DNA-binding region (ETS).

The protein belongs to the ETS family.

The protein resides in the nucleus. Its function is as follows. May act as a sequence specific transcriptional activator. In Paleosuchus palpebrosus (Cuvier's smooth-fronted caiman), this protein is Transcription factor Spi-B-like.